The sequence spans 275 residues: Shikimate dehydrogenase (NADP(+)) (275 aa).

Shikimate is bound by residues 17 to 19 (SKS) and T64. The active-site Proton acceptor is K68. E80 is a binding site for NADP(+). The shikimate site is built by N89 and D105. Residues 129–133 (GAGGA), 152–157 (NRTFFK), and M216 contribute to the NADP(+) site. Y218 lines the shikimate pocket. G240 contacts NADP(+).

This sequence belongs to the shikimate dehydrogenase family. Homodimer.

The catalysed reaction is shikimate + NADP(+) = 3-dehydroshikimate + NADPH + H(+). It participates in metabolic intermediate biosynthesis; chorismate biosynthesis; chorismate from D-erythrose 4-phosphate and phosphoenolpyruvate: step 4/7. Functionally, involved in the biosynthesis of the chorismate, which leads to the biosynthesis of aromatic amino acids. Catalyzes the reversible NADPH linked reduction of 3-dehydroshikimate (DHSA) to yield shikimate (SA). This Pectobacterium atrosepticum (strain SCRI 1043 / ATCC BAA-672) (Erwinia carotovora subsp. atroseptica) protein is Shikimate dehydrogenase (NADP(+)).